Consider the following 425-residue polypeptide: Proline--tRNA ligase (425 aa).

It belongs to the class-II aminoacyl-tRNA synthetase family. ProS type 2 subfamily. In terms of assembly, homodimer.

It localises to the cytoplasm. The enzyme catalyses tRNA(Pro) + L-proline + ATP = L-prolyl-tRNA(Pro) + AMP + diphosphate. In terms of biological role, catalyzes the attachment of proline to tRNA(Pro) in a two-step reaction: proline is first activated by ATP to form Pro-AMP and then transferred to the acceptor end of tRNA(Pro). In Anaplasma marginale (strain St. Maries), this protein is Proline--tRNA ligase.